Consider the following 293-residue polypeptide: MGAALSDTNYAVIYDLHSHTTASDGLLTPETLVHRAVEMRVGTLAITDHDTTAAIPAAREEISRSGLALNLIPGVEISTVWENHEIHIVGLNIDIAHPAMRDFLAQQTERRQARGRLIAERLEKAHIPGAWEGALRLANGGAVTRGHFARFLVECGKAATMADVFKKYLARGKTGYVPPQWCTIEQAIDVIHHSGGKAVLAHPGRYDLSAKWLKRLVAHFADHHGDAMEVAQCQQSPNERTQLATLARQHHLWASLGSDFHQPCPWIELGRKLWLPAGVEGVWQTWEQPQISQ.

Residues histidine 17, histidine 19, aspartate 24, histidine 49, glutamate 76, histidine 87, histidine 202, aspartate 259, and histidine 261 each coordinate Mn(2+).

Belongs to the PHP family. TrpH/YciV subfamily. Mn(2+) is required as a cofactor.

The enzyme catalyses a ribonucleoside 3',5'-bisphosphate + H2O = a ribonucleoside 5'-phosphate + phosphate. In terms of biological role, exoribonuclease that catalyzes the last steps of 5S, 16S and 23S rRNA 5'-end maturation. Removes 3 nucleotides (nt) from the 5' end of 5S, 16S and 23S rRNA precursors to generate the mature 5' ends. 5S and 23S rRNA maturation occurs more efficiently and accurately on ribosomal particles as compared to free RNA. Efficiently catalyzes the hydrolysis of the 3'-phosphate from 3',5'-bis-phosphonucleotides as well as the successive hydrolysis of 5'-phosphomononucleotides from the 5'-end of short pieces of RNA and DNA, with no specificity toward the identity of the nucleotide base. Is more efficient at hydrolyzing RNA oligonucleotides than DNA oligonucleotides. This enzyme can also hydrolyze annealed DNA duplexes, albeit at a catalytic efficiency lower than that of the corresponding single-stranded oligonucleotides. The polypeptide is 5'-3' exoribonuclease Rnm (Salmonella typhimurium (strain LT2 / SGSC1412 / ATCC 700720)).